Consider the following 76-residue polypeptide: VpAmp1.0 (76 aa).

An N-terminal signal peptide occupies residues 1 to 22 (MKLINLVPVFFVLIIVVDYCHS). Residue isoleucine 41 is modified to Isoleucine amide. A propeptide spanning residues 42-76 (GKRSVESQRYVDLNRRDLEQDLQELQDFLDQISEH) is cleaved from the precursor.

The protein belongs to the non-disulfide-bridged peptide (NDBP) superfamily. Short antimicrobial peptide (group 4) family. In terms of tissue distribution, expressed by the venom gland.

The protein resides in the secreted. The protein localises to the target cell membrane. Its function is as follows. Antimicrobial peptide with potent activity against Gram-positive bacteria S.aureus (MIC=2.5 uM) and S.agalactiaea (MIC=2.5 uM), and Gram-negative bacteria E.coli (MIC=24 uM) and P.aeruginosa (MIC=2.5 uM), as well as against yeasts Candida albicans (MIC=6.25 uM) and C.glabrata (MIC&gt;50 uM). Also elicits high hemolysis on human erythrocytes (HC(50)=9.2 uM). The sequence is that of VpAmp1.0 from Mesomexovis punctatus (Scorpion).